Reading from the N-terminus, the 361-residue chain is Protein RecA (361 aa).

ATP is bound at residue 77–84 (GPESSGKT).

Belongs to the RecA family.

It localises to the cytoplasm. In terms of biological role, can catalyze the hydrolysis of ATP in the presence of single-stranded DNA, the ATP-dependent uptake of single-stranded DNA by duplex DNA, and the ATP-dependent hybridization of homologous single-stranded DNAs. It interacts with LexA causing its activation and leading to its autocatalytic cleavage. This Rhizobium etli protein is Protein RecA.